The sequence spans 211 residues: MEIKDLGVMPYAEAYALQEQLVRDIAAGSAPETLLLVEHPPVYTLGRSGHMENLLDDSIEVVSINRGGDITYHAPGQLVGYPLLNLGLRGRDLRHYLRFLEEVLIAAAADTGVEGFRREGKTGVWTEQGKLASIGAGARRWVTMHGFALNVCLDLSGFSRIHPCGIVGCTMTSLQQITGQPVSMAQVKARVVYHFQSLLKTWLPLAQVATL.

The 176-residue stretch at 28–203 (GSAPETLLLV…HFQSLLKTWL (176 aa)) folds into the BPL/LPL catalytic domain. Substrate contacts are provided by residues 66–73 (RGGDITYH), 133–135 (SIG), and 146–148 (GFA). Cys164 functions as the Acyl-thioester intermediate in the catalytic mechanism.

It belongs to the LipB family.

Its subcellular location is the cytoplasm. The enzyme catalyses octanoyl-[ACP] + L-lysyl-[protein] = N(6)-octanoyl-L-lysyl-[protein] + holo-[ACP] + H(+). Its pathway is protein modification; protein lipoylation via endogenous pathway; protein N(6)-(lipoyl)lysine from octanoyl-[acyl-carrier-protein]: step 1/2. Catalyzes the transfer of endogenously produced octanoic acid from octanoyl-acyl-carrier-protein onto the lipoyl domains of lipoate-dependent enzymes. Lipoyl-ACP can also act as a substrate although octanoyl-ACP is likely to be the physiological substrate. This chain is Octanoyltransferase, found in Syntrophotalea carbinolica (strain DSM 2380 / NBRC 103641 / GraBd1) (Pelobacter carbinolicus).